The sequence spans 402 residues: Queuine tRNA-ribosyltransferase-like protein (402 aa).

This sequence belongs to the queuine tRNA-ribosyltransferase family.

This chain is Queuine tRNA-ribosyltransferase-like protein, found in Theileria annulata.